We begin with the raw amino-acid sequence, 337 residues long: tRNA pseudouridine synthase D (337 aa).

Catalysis depends on Asp-77, which acts as the Nucleophile. A TRUD domain is found at 152–308; the sequence is GFPNYFTEQR…ARDFHWEFVE (157 aa).

The protein belongs to the pseudouridine synthase TruD family.

The catalysed reaction is uridine(13) in tRNA = pseudouridine(13) in tRNA. In terms of biological role, responsible for synthesis of pseudouridine from uracil-13 in transfer RNAs. In Mannheimia succiniciproducens (strain KCTC 0769BP / MBEL55E), this protein is tRNA pseudouridine synthase D.